The chain runs to 203 residues: V-type ATP synthase subunit D (203 aa).

This sequence belongs to the V-ATPase D subunit family.

Its function is as follows. Produces ATP from ADP in the presence of a proton gradient across the membrane. The protein is V-type ATP synthase subunit D (atpD) of Chlamydia muridarum (strain MoPn / Nigg).